A 109-amino-acid chain; its full sequence is Small ribosomal subunit protein eS25z (109 aa).

Residues 1–36 (MAPKKDKVPPPSSKPAKSGGGKQKKKKWSKGKQKEK) are disordered. Basic residues predominate over residues 22–31 (KQKKKKWSKG).

It belongs to the eukaryotic ribosomal protein eS25 family.

The chain is Small ribosomal subunit protein eS25z (RPS25A) from Arabidopsis thaliana (Mouse-ear cress).